The chain runs to 104 residues: L-rhamnose mutarotase (104 aa).

Position 18 (Tyr-18) interacts with substrate. The Proton donor role is filled by His-22. Substrate-binding positions include Tyr-41 and 76–77 (WW).

This sequence belongs to the rhamnose mutarotase family. As to quaternary structure, homodimer.

The protein resides in the cytoplasm. It carries out the reaction alpha-L-rhamnose = beta-L-rhamnose. It participates in carbohydrate metabolism; L-rhamnose metabolism. Its function is as follows. Involved in the anomeric conversion of L-rhamnose. The polypeptide is L-rhamnose mutarotase (Bacillus subtilis (strain 168)).